Consider the following 740-residue polypeptide: Phosphoribosylformylglycinamidine synthase subunit PurL (740 aa).

His50 is a catalytic residue. Tyr53 and Lys92 together coordinate ATP. Mg(2+) is bound at residue Glu94. Residues 95 to 98 and Arg117 each bind substrate; that span reads SHNH. His96 functions as the Proton acceptor in the catalytic mechanism. Residue Asp118 participates in Mg(2+) binding. Gln241 provides a ligand contact to substrate. Residue Asp269 participates in Mg(2+) binding. Residue 313-315 coordinates substrate; that stretch reads ESQ. Asp495 and Gly532 together coordinate ATP. Mg(2+) is bound at residue Asn533. Residue Ser535 participates in substrate binding.

Belongs to the FGAMS family. In terms of assembly, monomer. Part of the FGAM synthase complex composed of 1 PurL, 1 PurQ and 2 PurS subunits.

The protein resides in the cytoplasm. The catalysed reaction is N(2)-formyl-N(1)-(5-phospho-beta-D-ribosyl)glycinamide + L-glutamine + ATP + H2O = 2-formamido-N(1)-(5-O-phospho-beta-D-ribosyl)acetamidine + L-glutamate + ADP + phosphate + H(+). Its pathway is purine metabolism; IMP biosynthesis via de novo pathway; 5-amino-1-(5-phospho-D-ribosyl)imidazole from N(2)-formyl-N(1)-(5-phospho-D-ribosyl)glycinamide: step 1/2. Functionally, part of the phosphoribosylformylglycinamidine synthase complex involved in the purines biosynthetic pathway. Catalyzes the ATP-dependent conversion of formylglycinamide ribonucleotide (FGAR) and glutamine to yield formylglycinamidine ribonucleotide (FGAM) and glutamate. The FGAM synthase complex is composed of three subunits. PurQ produces an ammonia molecule by converting glutamine to glutamate. PurL transfers the ammonia molecule to FGAR to form FGAM in an ATP-dependent manner. PurS interacts with PurQ and PurL and is thought to assist in the transfer of the ammonia molecule from PurQ to PurL. In Brucella canis (strain ATCC 23365 / NCTC 10854 / RM-666), this protein is Phosphoribosylformylglycinamidine synthase subunit PurL.